The chain runs to 1669 residues: MKTITPDTTTTTSSQHQQLLIPQADQHHQPMLQQQSLLAAPPPTMIMEHVNLVDDDEKDPLALEQLEVSPSTKHTHSLRRHLPRIIVKPIPPEKKPMAPSEEAAVSTAPAPPTRLICSRRIQQQQQVKAAAAAAAAAAAAAAAAAAAAQAQATSSYPSAISPGSKAGTSQASTMREVLASIPGFSVKPRRRSNKKLTTAAQIEQTKDGKIDLETPDSILASTNLRALLNKQTFSLLPPLYQYNLIQLLPSVDREASELEQPSSSASGGSPSEAIRLSASCLNNEFFARACLEWRERLSEGEFTPENQLKLKTEAEREKNKLDPWKLKHFEPFWGEKNSRGKDKDKLESDCKNQKLSASIKSEPKPPATSQQKPLQQATCDNETELKFDLSTKCETTSAKTTVAVAVADKSSTFPPTGSQNNVLNEQQRRVLKRPSSSPSQRKQAPTTIATINLDDDLDELPSTSKDSKQPKMDEIVPNASGNVVAAPMVDVVDHSAVEMKIKDEQQHQRQHQPLINSTCDKIEPSECSKEMIVAMKQVDSKEDVDSIASAAAMPAIAAVTPHTPKPEALAPNPDVANQFVSYLQNVELAAETKAPLDNSNEADITTGTNSHDFVFSDTIDHAYFQEHQSTINHNFFTSSSSSNTATTAANKLEEHSDKPEDSPLPIASSISGSTPASSITSTSCTSSSSSSASMSSSCSSSNSGSTTTAPTTSSSAGAPTAPLTLAAAAETTLANVQAMLSTVAKLQQQQQELPVELNSNEMYQHVQHDWNFGDIKLSSSQSSGDQQRNLSHEAIDLMDVVQDADVIDDIMHNDVCHDVLGDEDEGDQEEDEDDEVVECMTEEQQLIDEDSEAVREIVDKLQQHQQQQNQQQHHQQLHIQDVVQLAQHSFMPQAHSEFGNDIGQEMLCDAVPMSAAEMEVSSTVITNSSNSNDSSNNISLCSSTNSLTINQMPHQASQQPQQNAQSNAQQQRQILVDSNGQIIGNFLLQQQRQQQQQQLLQQFTLQAAAAQQQQQQQQQHQQQQQQQQQATSSNSLGKTLPVALRNGTQQFLSPNLIAQQHQQQQQQQLEQHQQQATAQQKHQQIQQFALQQAQLHQRQLLAQAANNNLLQQQQQQQQNVALPTTQAKFIAKPLNIISMTRPANASPTTAATTANTASIPSAYANVVAVTGAQQQQSPPVPAPQQQTVQQQQLANHNSNMQQLPNVLTMKTLPPSGVPTTIAQQRLQPKMPTGKGRKATSNRLPPGAVNLERSYQICQAVIQNSPNRENLKAQLRPPAAILNQHQPTTTTAPAPINPVTLNVSTVAATPMSNITTATGSMAAAVAAAPPQNVLKQEELLVSGAVGAGALPAGLPPNVMGVGRPGVYKVIGPRMSGFPRKKYVQRKPSPTTLIRHVFSPGPGGATATAQQLQMLQQHHQSTTSPVPVQNPQQPAPEQLIHQNGNGQYVLVHRANVGAADNQAPRASSAPPMHQNQFVTVQNPLHSINGIPMGGRGRPASVDTTAGSGNVIAPPISATDALHHHHHEMQQQQQHQQPQPLGNVGAAANIVRRNIAAGPNIAYIDGSNTNSSAVALMEAGNNYIVTTNASPTAAPSPINQQPQSQPTGTQHQHPLLQLHQTGENTPPGNEATATANNCACSLNAMVICQQCGAFCHDDCIGAAKLCVACVIR.

Residues 90–109 (IPPEKKPMAPSEEAAVSTAP) are disordered. The region spanning 215–338 (PDSILASTNL…FEPFWGEKNS (124 aa)) is the DEUBAD domain. 2 short sequence motifs (LXXLL motif) span residues 224-228 (LRALL) and 244-248 (LIQLL). An NEF motif motif is present at residues 283–285 (NEF). A compositionally biased stretch (basic and acidic residues) spans 336 to 352 (KNSRGKDKDKLESDCKN). Disordered regions lie at residues 336–378 (KNSR…QQAT), 410–478 (SSTF…IVPN), 635–718 (FFTS…SAGA), 952–972 (MPHQ…QQQR), 1174–1193 (QQQS…QQQL), 1398–1437 (PGPG…PEQL), 1482–1505 (LHSI…TAGS), and 1587–1610 (SPTA…QHQH). 3 stretches are compositionally biased toward polar residues: residues 367 to 378 (ATSQQKPLQQAT), 413 to 425 (FPPT…VLNE), and 434 to 450 (PSSS…TIAT). The span at 465–474 (KDSKQPKMDE) shows a compositional bias: basic and acidic residues. Residues 635–650 (FFTSSSSSNTATTAAN) are compositionally biased toward low complexity. A compositionally biased stretch (basic and acidic residues) spans 651 to 661 (KLEEHSDKPED). A compositionally biased stretch (low complexity) spans 666 to 718 (IASSISGSTPASSITSTSCTSSSSSSASMSSSCSSSNSGSTTTAPTTSSSAGA). Low complexity-rich tracts occupy residues 1174–1192 (QQQS…QQQQ) and 1404–1436 (TATA…APEQ). Residues 1592 to 1610 (PSPINQQPQSQPTGTQHQH) are compositionally biased toward low complexity. The segment at 1602–1666 (QPTGTQHQHP…IGAAKLCVAC (65 aa)) adopts a PHD-type; atypical zinc-finger fold.

It belongs to the Asx family. In terms of assembly, component of the polycomb repressive deubiquitinase (PR-DUB) complex, at least composed of caly/calypso, Asx and sba (MBD5/6 homolog). Interacts (via DEUBAD domain) with caly/calypso (via ULD domain); the interaction produces a stable heterodimer with a composite binding site for ubiquitin. Two copies of the caly-Asx heterodimer assemble into a bidentate tetramer. Interacts (via PHD domain) with sba (probably via MBD domain); the interaction is important for the stability of the PR-DUB complex. Interacts with tant. Interacts with cyclin CycG. Highly expressed in nurse cells and deposited in oocytes late in oogenesis. Ubiquitous in early embryos. Late embryos show higher levels in CNS and neurectoderm.

Its subcellular location is the nucleus. It is found in the chromosome. Functionally, non-catalytic component of the polycomb repressive deubiquitinase (PR-DUB) complex, a complex that specifically mediates deubiquitination of histone H2A monoubiquitinated at 'Lys-119' (H2AK118ub1). Activator of the PR-DUB complex involved in ubiquitin binding and allosteric activation of calypso deubiquitinase activity. PR-DUB does not deubiquitinate monoubiquitinated histone H2B. PR-DUB is required to maintain the transcriptionally repressive state of homeotic genes throughout development. The PR-DUB complex has weak or no activity toward 'Lys-48'- and 'Lys-63'-linked polyubiquitin chains. Atypical Polycomb group protein, which may be involved in both Polycomb group (PcG) and trithorax group (trxG) complexes. PcG and trxG proteins act by forming multiprotein complexes, which are respectively required to maintain the transcriptionally repressive and transcriptionally active state of homeotic genes throughout development. PcG and trxG protein complexes are not required to initiate repression and activation, but to maintain it during later stages of development. The protein is Polycomb group protein Asx of Drosophila melanogaster (Fruit fly).